The sequence spans 501 residues: Probable leucine aminopeptidase 2 (501 aa).

Residues Met-1–Ala-18 form the signal peptide. In terms of domain architecture, PA spans Ser-119–Ile-216. N-linked (GlcNAc...) asparagine glycans are attached at residues Asn-123 and Asn-233. Zn(2+)-binding residues include His-257 and Asp-269. Glu-301 functions as the Proton acceptor in the catalytic mechanism. A Zn(2+)-binding site is contributed by Glu-302. Asn-316 carries an N-linked (GlcNAc...) asparagine glycan. Asp-330 is a binding site for Zn(2+). The N-linked (GlcNAc...) asparagine glycan is linked to Asn-350. His-428 provides a ligand contact to Zn(2+). 2 N-linked (GlcNAc...) asparagine glycosylation sites follow: Asn-433 and Asn-467. The disordered stretch occupies residues Ala-480 to Gln-501.

This sequence belongs to the peptidase M28 family. M28A subfamily. Monomer. Zn(2+) is required as a cofactor.

It localises to the secreted. Functionally, extracellular aminopeptidase that releases a wide variety of amino acids from natural peptides and contributes to pathogenicity. The polypeptide is Probable leucine aminopeptidase 2 (lap2) (Aspergillus fumigatus (strain ATCC MYA-4609 / CBS 101355 / FGSC A1100 / Af293) (Neosartorya fumigata)).